The sequence spans 234 residues: Phosphoribosylformylglycinamidine synthase subunit PurQ (234 aa).

Residues 4–234 enclose the Glutamine amidotransferase type-1 domain; it reads RIGVVTFPGS…TSILKKLVNA (231 aa). Cys87 functions as the Nucleophile in the catalytic mechanism. Catalysis depends on residues His204 and Glu206.

In terms of assembly, part of the FGAM synthase complex composed of 1 PurL, 1 PurQ and 2 PurS subunits.

It localises to the cytoplasm. It catalyses the reaction N(2)-formyl-N(1)-(5-phospho-beta-D-ribosyl)glycinamide + L-glutamine + ATP + H2O = 2-formamido-N(1)-(5-O-phospho-beta-D-ribosyl)acetamidine + L-glutamate + ADP + phosphate + H(+). The enzyme catalyses L-glutamine + H2O = L-glutamate + NH4(+). It participates in purine metabolism; IMP biosynthesis via de novo pathway; 5-amino-1-(5-phospho-D-ribosyl)imidazole from N(2)-formyl-N(1)-(5-phospho-D-ribosyl)glycinamide: step 1/2. In terms of biological role, part of the phosphoribosylformylglycinamidine synthase complex involved in the purines biosynthetic pathway. Catalyzes the ATP-dependent conversion of formylglycinamide ribonucleotide (FGAR) and glutamine to yield formylglycinamidine ribonucleotide (FGAM) and glutamate. The FGAM synthase complex is composed of three subunits. PurQ produces an ammonia molecule by converting glutamine to glutamate. PurL transfers the ammonia molecule to FGAR to form FGAM in an ATP-dependent manner. PurS interacts with PurQ and PurL and is thought to assist in the transfer of the ammonia molecule from PurQ to PurL. The polypeptide is Phosphoribosylformylglycinamidine synthase subunit PurQ (Streptomyces avermitilis (strain ATCC 31267 / DSM 46492 / JCM 5070 / NBRC 14893 / NCIMB 12804 / NRRL 8165 / MA-4680)).